The primary structure comprises 450 residues: MQSIFGTDGIRGRFNEEITYSLAYKVGYALGSNLENNNPILIGRDTRISGDILLHAITKGINASGKKFINLGICPTPAIPFLIKQEQLSSGIMISASHNPPEYNGIKIFDHNGQKITKNFENKIQKFIEESNQNISVTTKEISLKANKELMDIYMKSLIQSMGGENLSGMKIILDTCYGSATTCAKKIFQSLGADVRVLNNSKNGLKINVNCGSTNLEPLKKALRQSPADMGFSFDGDSDRVIGLDSKGNVLDGDHILFLWGRELMEQKILTNNLLISTQMANLGFEEAWNKIGGLLYRTDVGDKYVHDAIKEKRAVLGGEQSGHILSKINNFSGDGILTALQISKYCKKKNITLNNWLKTSFEPFPQKLTNINLNFNINKVNQKTRILINQTTENFQKIYSDNCRIYIRPSGTEPLMRVLVEAKSHKKVDSLSSEIANKLILEINKIMN.

The active-site Phosphoserine intermediate is serine 97. 4 residues coordinate Mg(2+): serine 97, aspartate 236, aspartate 238, and aspartate 240. The residue at position 97 (serine 97) is a Phosphoserine.

Belongs to the phosphohexose mutase family. The cofactor is Mg(2+). Post-translationally, activated by phosphorylation.

The catalysed reaction is alpha-D-glucosamine 1-phosphate = D-glucosamine 6-phosphate. Catalyzes the conversion of glucosamine-6-phosphate to glucosamine-1-phosphate. The chain is Phosphoglucosamine mutase from Prochlorococcus marinus (strain MIT 9312).